The primary structure comprises 284 residues: F-box only protein 6 (284 aa).

The F-box domain maps to 1-48; that stretch reads MVNINELPENILLELFTHVPAPQLLRNCRLVCSLWRDLIDVMTLWKRK. Residues 69 to 250 enclose the FBA domain; sequence FYILCSLQRN…VTNSSIIVSH (182 aa). Residues Ser-249, Ser-268, Ser-275, Ser-278, and Ser-283 each carry the phosphoserine modification.

As to quaternary structure, part of a SCF (SKP1-cullin-F-box) protein ligase complex. Interacts with VCP, CHEK1 and CUL1.

It is found in the cytoplasm. It functions in the pathway protein modification; protein ubiquitination. Functionally, substrate-recognition component of some SCF (SKP1-CUL1-F-box protein)-type E3 ubiquitin ligase complexes. Involved in endoplasmic reticulum-associated degradation pathway (ERAD) for misfolded lumenal proteins by recognizing and binding sugar chains on unfolded glycoproteins that are retrotranslocated into the cytosol and promoting their ubiquitination and subsequent degradation. Able to recognize and bind denatured glycoproteins, which are modified with not only high-mannose but also complex-type oligosaccharides. Also recognizes sulfated glycans. Also involved in DNA damage response by specifically recognizing activated CHEK1 (phosphorylated on 'Ser-345'), promoting its ubiquitination and degradation. Ubiquitination of CHEK1 is required to ensure that activated CHEK1 does not accumulate as cells progress through S phase, or when replication forks encounter transient impediments during normal DNA replication. In Rattus norvegicus (Rat), this protein is F-box only protein 6 (Fbxo6).